The primary structure comprises 591 residues: L-fucose isomerase (591 aa).

Active-site proton acceptor residues include E337 and D361. Residues E337, D361, and H528 each coordinate Mn(2+).

It belongs to the L-fucose isomerase family. Homohexamer. Mn(2+) is required as a cofactor.

The protein localises to the cytoplasm. The catalysed reaction is L-fucose = L-fuculose. It participates in carbohydrate degradation; L-fucose degradation; L-lactaldehyde and glycerone phosphate from L-fucose: step 1/3. Its function is as follows. Converts the aldose L-fucose into the corresponding ketose L-fuculose. The polypeptide is L-fucose isomerase (Klebsiella pneumoniae (strain 342)).